The primary structure comprises 474 residues: Myocyte-specific enhancer factor 2C (474 aa).

In terms of domain architecture, MADS-box spans 3 to 57 (RKKIQITRIMDERNRQVTFTKRKFGLMKKAYELSVLCDCEIALIIFNSTNKLFQY). K4 bears the N6-acetyllysine mark. A DNA-binding region (mef2-type) is located at residues 58-86 (ASTDMDKVLLKYTEYNEPHESRTNSDIVE). S59 carries the phosphoserine; by CK2 modification. Residues 91 to 118 (KGLNGCDSPDPDADDSVGHSPESEDKYR) form a disordered region. Residues S98 and S106 each carry the phosphoserine modification. Position 108 is a phosphothreonine (G108). S110 carries the phosphoserine modification. K116 and K119 each carry N6-acetyllysine. Phosphoserine is present on residues S222 and S228. N6-acetyllysine occurs at positions 234 and 239. S240 bears the Phosphoserine mark. N6-acetyllysine is present on residues K252 and K264. Residues 271–278 (SEDVDLLL) form a beta domain region. 2 positions are modified to phosphothreonine; by MAPK14: T293 and T300. The tract at residues 368–399 (ACTSTHLSQSSNLSLPSTQSLSIKSEPVSPPR) is transcription repressor. The span at 375–390 (SQSSNLSLPSTQSLSI) shows a compositional bias: polar residues. Positions 375 to 474 (SQSSNLSLPS…RMRLSEGWAT (100 aa)) are disordered. K391 is covalently cross-linked (Glycyl lysine isopeptide (Lys-Gly) (interchain with G-Cter in SUMO)). S396 carries the post-translational modification Phosphoserine; by CDK5. Position 420 is a phosphoserine; by MAPK7 (S420). A compositionally biased stretch (low complexity) spans 420–433 (SPVDSLSSCSSSYD). Residues 434–444 (GSDREDHRNEF) are compositionally biased toward basic and acidic residues. The residue at position 446 (S446) is a Phosphoserine.

This sequence belongs to the MEF2 family. Forms a complex with class II HDACs in undifferentiating cells. On myogenic differentiation, HDACs are released into the cytoplasm allowing MEF2s to interact with other proteins for activation. Interacts with EP300 in differentiating cells; the interaction acetylates MEF2C leading to increased DNA binding and activation. Interacts with HDAC7 and CARM1. Interacts with HDAC4, HDAC7 AND HDAC9; the interaction with HDACs represses transcriptional activity. Interacts with LPIN1. Interacts with MYOCD. Interacts with AKAP13. Interacts with FOXK1; the interaction inhibits MEF2C transactivation activity. Interacts (via N-terminus) with HABP4; this interaction decreases DNA-binding activity of MEF2C in myocardial cells in response to mechanical stress. Interacts with JPH2; interaction specifically takes place with the Junctophilin-2 N-terminal fragment cleavage product of JPH2. Interacts (via MADS box) with SOX18. Interacts with PHF7; the interaction promotes MEF2C binding to its transcription targets. Post-translationally, phosphorylation on Ser-59 enhances DNA binding activity. Phosphorylation on Ser-396 is required for Lys-391 sumoylation and inhibits transcriptional activity. In terms of processing, acetylated by p300 on several sites in diffentiating myocytes. Acetylation on Lys-4 increases DNA binding and transactivation. Sumoylated on Lys-391 with SUMO2 but not by SUMO1 represses transcriptional activity. Post-translationally, proteolytically cleaved in cerebellar granule neurons, probably by caspase 7, following neurotoxicity. Preferentially cleaves the CDK5-mediated hyperphosphorylated form which leads to neuron apoptosis and transcriptional inactivation. In terms of tissue distribution, widely expressed though mainly restricted to skeletal and cardiac muscle, brain, neurons and lymphocytes. Beta domain-lacking isoforms are the most predominantly expressed in all tissues including skeletal and cardiac muscle and brain. Only brain expresses all isoforms. Expression occurs primarily in the internal granule cell layer of the olfactory bulb, cortex, thalamus, hippocampus and cerebellum. Low levels in the cerebellum and hindbrain. Expressed throughout the cortex, including the frontal and entorhinal cortex, dentate gyrus, and basolateral amygdala. Selectively expressed in B-cells but not in T-cells, and its expression increases as B-cells mature.

It localises to the nucleus. It is found in the cytoplasm. Its subcellular location is the sarcoplasm. In terms of biological role, transcription activator which binds specifically to the MEF2 element present in the regulatory regions of many muscle-specific genes. Controls cardiac morphogenesis and myogenesis, and is also involved in vascular development. Enhances transcriptional activation mediated by SOX18. May also be involved in neurogenesis and in the development of cortical architecture. Isoforms that lack the repressor domain are more active than isoform 1. Plays an essential role in hippocampal-dependent learning and memory by suppressing the number of excitatory synapses and thus regulating basal and evoked synaptic transmission. Crucial for normal neuronal development, distribution, and electrical activity in the neocortex. Necessary for proper development of megakaryocytes and platelets and for bone marrow B-lymphopoiesis. Required for B-cell survival and proliferation in response to BCR stimulation, efficient IgG1 antibody responses to T-cell-dependent antigens and for normal induction of germinal center B-cells. In Mus musculus (Mouse), this protein is Myocyte-specific enhancer factor 2C.